Here is a 35-residue protein sequence, read N- to C-terminus: Small toxic polypeptide LdrB (35 aa).

Residues 10–30 form a helical membrane-spanning segment; the sequence is FWHDLAAPILAGIITAAIVGW.

The protein belongs to the Ldr toxic peptide family.

The protein resides in the cell inner membrane. In terms of biological role, toxic component of a type I toxin-antitoxin (TA) system. Overexpression causes rapid cell killing, probably by disrupting the cell inner membrane and disruption of ATP synthesis. This is Small toxic polypeptide LdrB (ldrB) from Escherichia coli (strain K12).